A 277-amino-acid chain; its full sequence is 3-methyl-2-oxobutanoate hydroxymethyltransferase (277 aa).

Positions 58 and 97 each coordinate Mg(2+). Residues 58–59 (DS), Asp97, and Lys127 each bind 3-methyl-2-oxobutanoate. Glu129 serves as a coordination point for Mg(2+). Glu195 functions as the Proton acceptor in the catalytic mechanism.

It belongs to the PanB family. As to quaternary structure, homodecamer; pentamer of dimers. Mg(2+) serves as cofactor.

Its subcellular location is the cytoplasm. The catalysed reaction is 3-methyl-2-oxobutanoate + (6R)-5,10-methylene-5,6,7,8-tetrahydrofolate + H2O = 2-dehydropantoate + (6S)-5,6,7,8-tetrahydrofolate. It participates in cofactor biosynthesis; (R)-pantothenate biosynthesis; (R)-pantoate from 3-methyl-2-oxobutanoate: step 1/2. Functionally, catalyzes the reversible reaction in which hydroxymethyl group from 5,10-methylenetetrahydrofolate is transferred onto alpha-ketoisovalerate to form ketopantoate. In Leifsonia xyli subsp. xyli (strain CTCB07), this protein is 3-methyl-2-oxobutanoate hydroxymethyltransferase.